The sequence spans 165 residues: Ribosome maturation factor RimM (165 aa).

Residues 94 to 165 (EDEFYIADLT…YVILNYQREA (72 aa)) enclose the PRC barrel domain.

Belongs to the RimM family. Binds ribosomal protein uS19.

The protein resides in the cytoplasm. In terms of biological role, an accessory protein needed during the final step in the assembly of 30S ribosomal subunit, possibly for assembly of the head region. Essential for efficient processing of 16S rRNA. May be needed both before and after RbfA during the maturation of 16S rRNA. It has affinity for free ribosomal 30S subunits but not for 70S ribosomes. This Rickettsia conorii (strain ATCC VR-613 / Malish 7) protein is Ribosome maturation factor RimM.